A 79-amino-acid polypeptide reads, in one-letter code: Ferredoxin (79 aa).

4Fe-4S ferredoxin-type domains are found at residues 2-30 (PHVI…YDGG) and 31-60 (DQFY…PEED). Residues Cys9 and Cys17 each contribute to the [3Fe-4S] cluster site. Positions 21, 40, 43, and 46 each coordinate [4Fe-4S] cluster. Cys50 contributes to the [3Fe-4S] cluster binding site.

The cofactor is [4Fe-4S] cluster. [3Fe-4S] cluster is required as a cofactor.

Functionally, ferredoxins are iron-sulfur proteins that transfer electrons in a wide variety of metabolic reactions. The protein is Ferredoxin of Thermus thermophilus (strain ATCC 27634 / DSM 579 / HB8).